Here is a 418-residue protein sequence, read N- to C-terminus: Putative ion-transport protein YfeO (418 aa).

Transmembrane regions (helical) follow at residues 10-30, 54-74, 99-119, 120-140, 149-169, 186-206, 223-243, 258-278, 300-320, 322-342, 343-363, and 371-391; these read LLLS…LIVV, DSPF…GLVI, ALLG…SLGP, EHPI…RLLP, ILAS…AALI, LFAP…FFHP, ILSG…AVWC, VLVL…GGPV, DYFL…ASGF, GGRI…LHEH, VPAV…VLVV, and LFMA…CIVM.

The protein belongs to the chloride channel (TC 2.A.49) family.

The protein localises to the cell membrane. The protein is Putative ion-transport protein YfeO of Escherichia coli O17:K52:H18 (strain UMN026 / ExPEC).